A 1336-amino-acid polypeptide reads, in one-letter code: Zinc finger protein 335 (1336 aa).

Disordered stretches follow at residues methionine 1 to serine 108 and proline 199 to proline 222. 2 stretches are compositionally biased toward low complexity: residues threonine 31–alanine 45 and serine 54–arginine 65. A C2H2-type 1 zinc finger spans residues phenylalanine 247–histidine 270. Disordered regions lie at residues alanine 282–serine 398 and valine 415–serine 442. Over residues glutamate 300–glutamate 331 the composition is skewed to acidic residues. Low complexity predominate over residues leucine 339–leucine 349. A compositionally biased stretch (basic residues) spans arginine 350–leucine 361. Positions proline 362–isoleucine 373 are enriched in basic and acidic residues. The span at valine 378–proline 387 shows a compositional bias: polar residues. 8 C2H2-type zinc fingers span residues tyrosine 465 to histidine 487, phenylalanine 495 to histidine 517, tyrosine 523 to histidine 545, phenylalanine 562 to histidine 584, histidine 590 to histidine 612, phenylalanine 621 to histidine 643, phenylalanine 649 to histidine 672, and phenylalanine 678 to histidine 701. Disordered regions lie at residues leucine 732–leucine 766 and leucine 961–serine 1013. Pro residues predominate over residues proline 752–leucine 766. Phosphoserine is present on residues serine 975 and serine 1006. 4 consecutive C2H2-type zinc fingers follow at residues phenylalanine 1018–histidine 1040, phenylalanine 1046–histidine 1068, histidine 1074–histidine 1096, and phenylalanine 1102–histidine 1125. Lysine 1021 is covalently cross-linked (Glycyl lysine isopeptide (Lys-Gly) (interchain with G-Cter in SUMO2)). Serine 1148 carries the phosphoserine modification.

This sequence belongs to the krueppel C2H2-type zinc-finger protein family. In terms of assembly, interacts with NCOA6; may enhance ligand-dependent transcriptional activation by nuclear hormone receptors. Interacts with CNOT6. Interacts with CNOT9; the interaction is direct. Component of a nuclear receptor-mediated transcription complex composed of at least ZNF335, CCAR2 and EMSY; the complex stimulates the transcription of nuclear receptor target genes such as SOX9 and HOXA1. Within the complex interacts with EMSY and interacts (via C-terminus) with CCAR2. Interacts with members of histone H3'Lys4'(H3K4) methyltransferase complexes ASH2L, CXXC1, KMT2A/MLL1, RBBP5, SETD1A and WDR5. Component of a histone methylation complex composed of at least ZNF335, RBBP5, ASH2L and WDR5; the complex may have histone H3-specific methyltransferase activity, however does not have specificity for 'Lys-4' of histone H3. Interacts with RBBP5 and WDR5. Interacts with ASHL2. Components of this complex may associate with components of the ZNF335-CCAR2-EMSY nuclear receptor-mediated transcription complex to form a complex at least composed of ZNF335, HCFC1, CCAR2, EMSY, MKI67, RBBP5, ASH2L and WDR5. Within this complex also interacts with HCFC1 and MKI67.

It localises to the nucleus. In terms of biological role, component or associated component of some histone methyltransferase complexes may regulate transcription through recruitment of those complexes on gene promoters. Enhances ligand-dependent transcriptional activation by nuclear hormone receptors. Plays an important role in neural progenitor cell proliferation and self-renewal through the regulation of specific genes involved brain development, including REST. Also controls the expression of genes involved in somatic development and regulates, for instance, lymphoblast proliferation. This is Zinc finger protein 335 (Znf335) from Rattus norvegicus (Rat).